The primary structure comprises 257 residues: UPF0246 protein lpg1366 (257 aa).

Belongs to the UPF0246 family.

This is UPF0246 protein lpg1366 from Legionella pneumophila subsp. pneumophila (strain Philadelphia 1 / ATCC 33152 / DSM 7513).